Reading from the N-terminus, the 620-residue chain is Bicaudal D-related protein homolog (620 aa).

Residues Asn23–Asn41 show a composition bias toward low complexity. Residues Asn23–Ser53 are disordered. 2 coiled-coil regions span residues Ala120 to Arg331 and Val461 to Glu575. Composition is skewed to basic and acidic residues over residues Lys493 to Leu503 and Arg509 to Thr528. Residues Lys493 to Thr528 form a disordered region.

Belongs to the BICDR family. As to quaternary structure, may homodimerize but does not interact with BicD. May interact with eEF1gamma; The interaction is probably indirect.

Its function is as follows. Functions redundantly with BicD. Involved in formation and/or development of mechanosensory organs during metamorphosis. During macrochaetae development, together with BicD, involved in Rab 6 and Spn-F stability and distribution and actin cytoskeleton organization. The protein is Bicaudal D-related protein homolog of Drosophila melanogaster (Fruit fly).